The following is a 253-amino-acid chain: Cyclin-C1-1 (253 aa).

The protein belongs to the cyclin family. Cyclin C subfamily.

This chain is Cyclin-C1-1 (CYCC1-1), found in Arabidopsis thaliana (Mouse-ear cress).